The primary structure comprises 549 residues: Probable glucuronosyltransferase Os01g0157700 (549 aa).

At Met1–Arg16 the chain is on the cytoplasmic side. A helical; Signal-anchor for type II membrane protein transmembrane segment spans residues Ala17–Ala37. At Ala38–Gly549 the chain is on the lumenal side. 9 N-linked (GlcNAc...) asparagine glycosylation sites follow: Asn112, Asn139, Asn214, Asn229, Asn240, Asn251, Asn264, Asn269, and Asn300. The segment at Glu232–Lys252 is disordered. Residues Ile350–Gly363 show a composition bias toward basic and acidic residues. Disordered stretches follow at residues Ile350–Met371, Glu413–Asp432, and Lys441–His524. Asn421 and Asn452 each carry an N-linked (GlcNAc...) asparagine glycan. 3 stretches are compositionally biased toward basic and acidic residues: residues Lys441 to Met465, Lys472 to Met496, and Lys503 to His524.

The protein belongs to the glycosyltransferase 43 family.

The protein resides in the golgi apparatus membrane. In terms of biological role, involved in the synthesis of glucuronoxylan hemicellulose in secondary cell walls. This chain is Probable glucuronosyltransferase Os01g0157700, found in Oryza sativa subsp. japonica (Rice).